The chain runs to 218 residues: dTTP/UTP pyrophosphatase (218 aa).

The span at 1–10 (MTASPSSAEG) shows a compositional bias: polar residues. Residues 1–20 (MTASPSSAEGSSGLPDRPKL) are disordered. Asp-87 acts as the Proton acceptor in catalysis.

Belongs to the Maf family. YhdE subfamily. A divalent metal cation is required as a cofactor.

It is found in the cytoplasm. The enzyme catalyses dTTP + H2O = dTMP + diphosphate + H(+). The catalysed reaction is UTP + H2O = UMP + diphosphate + H(+). Functionally, nucleoside triphosphate pyrophosphatase that hydrolyzes dTTP and UTP. May have a dual role in cell division arrest and in preventing the incorporation of modified nucleotides into cellular nucleic acids. The chain is dTTP/UTP pyrophosphatase from Gluconobacter oxydans (strain 621H) (Gluconobacter suboxydans).